Reading from the N-terminus, the 179-residue chain is Putative DUP240 protein DFP1 (179 aa).

2 helical membrane passes run 4 to 24 (FLLF…SGVL) and 26 to 46 (PAMV…IWSF).

Belongs to the DUP/COS family.

Its subcellular location is the membrane. This Saccharomyces cerevisiae (strain ATCC 204508 / S288c) (Baker's yeast) protein is Putative DUP240 protein DFP1.